The primary structure comprises 1563 residues: Galactose-specific cell agglutination protein gsf2 (1563 aa).

An N-terminal signal peptide occupies residues 1 to 27 (MSVRRFLSTSARALLFTAALLPSLTSG). Tandem repeats lie at residues 203-280 (TTTT…PTTV), 281-358 (TTTT…PTTV), 359-436 (TTTT…PTTV), 437-514 (TTTT…PTTV), 515-592 (TTTT…PTTV), 593-670 (TTTT…PTTV), 671-750 (TTTT…VSAT), 751-825 (TTTT…GTTT), 826-869 (VVIQ…GTTT), 870-913 (VVIQ…GTTT), 914-957 (VVIQ…GTTT), 958-1001 (VVIQ…GTTT), 1002-1045 (VVIQ…GTTT), 1046-1089 (VVIQ…GTTT), 1090-1133 (VVIQ…GTTT), 1134-1140 (VVINTPT), 1141-1162 (TTGS…ETQL), 1163-1184 (TTAT…ETQV), 1185-1200 (TTGT…ETQA), 1201-1221 (TTAT…TETQ), 1223-1244 (TTAT…ETQV), 1245-1266 (TTAT…ETQV), 1267-1282 (TTGT…ETQA), 1283-1304 (TTAT…ETQA), 1305-1326 (TTAT…ETQV), 1327-1348 (TTAT…ETQV), 1349-1364 (TTGT…ETQA), 1365-1386 (TTAT…ETQV), and 1387-1397 (TTATEVQPTTA). The segment at 203 to 825 (TTTTTVGYPG…IPTGTTGTTT (623 aa)) is 8 X 78 AA approximate tandem repeats. Residues Asn-224, Asn-263, Asn-302, Asn-341, Asn-380, Asn-419, Asn-458, Asn-497, Asn-536, Asn-575, Asn-614, and Asn-653 are each glycosylated (N-linked (GlcNAc...) asparagine). The N-linked (GlcNAc...) asparagine glycan is linked to Asn-784. The 8 X 44 AA approximate tandem repeats stretch occupies residues 826–1140 (VVIQTPTTVT…TTTVVINTPT (315 aa)). Residues 1135 to 1393 (VINTPTTTGS…TQVTTATEVQ (259 aa)) are disordered. Residues 1141-1397 (TTGSEVLPTT…TATEVQPTTA (257 aa)) form a 13 X 22 AA approximate tandem repeats region. 4 N-linked (GlcNAc...) asparagine glycosylation sites follow: Asn-1510, Asn-1516, Asn-1529, and Asn-1532. A lipid anchor (GPI-anchor amidated serine) is attached at Ser-1539. The propeptide at 1540–1563 (SAGANKPIAYLTFVSLFVYIVTLI) is removed in mature form.

This sequence belongs to the mam3/map4 family.

The protein resides in the cell membrane. Functionally, galactose-specific adhesion protein essential for non-sexual flocculation and filamentous growth. Required for adhesion and filamentous growth through recognition of galactose residues on cell surface glycoconjugates. Induces flocculation when overexpressed. This is Galactose-specific cell agglutination protein gsf2 from Schizosaccharomyces pombe (strain 972 / ATCC 24843) (Fission yeast).